Reading from the N-terminus, the 738-residue chain is NAD(P)H-quinone oxidoreductase subunit 5, chloroplastic (738 aa).

17 helical membrane passes run 9 to 29 (WVIPLLPLPVIMSMGFGLFLI), 39 to 59 (IWAFPSILLLSIAMVFSLHLS), 89 to 109 (VDPLTSIMLILITTVGILVLI), 125 to 145 (FVYISFFNTSMLGLVTSSNLI), 147 to 167 (IYFFWELVGMCSYLLIGFWFT), 185 to 205 (GDFGLLLGILGFFWITGSLEF), 219 to 239 (NGINSLLTTLCAFLLFLGAVA), 258 to 278 (TPISALIHAATMVAAGIFLLA), 280 to 300 (LLPLFISLPLIMSFISLVGTI), 327 to 347 (LGYMMLALGIGSYQAALFHLI), 354 to 374 (ALLFLGSGSVIHSMEPLVGYS), 396 to 416 (TTFLCGTLSLCGIPPLACFWS), 425 to 445 (WLYSPFFGIIASFTAGLTAFY), 542 to 562 (LFPLLILLLFTLFIGSIGIPF), 610 to 630 (SLAIFGLFIAYIFYGSAYSFF), 691 to 711 (GVIDGIINGVGLAGFCIGEEI), and 717 to 737 (GRISSYLFFFLCYVSLFLFFI).

The protein belongs to the complex I subunit 5 family. As to quaternary structure, NDH is composed of at least 16 different subunits, 5 of which are encoded in the nucleus.

It localises to the plastid. The protein localises to the chloroplast thylakoid membrane. It carries out the reaction a plastoquinone + NADH + (n+1) H(+)(in) = a plastoquinol + NAD(+) + n H(+)(out). The enzyme catalyses a plastoquinone + NADPH + (n+1) H(+)(in) = a plastoquinol + NADP(+) + n H(+)(out). Functionally, NDH shuttles electrons from NAD(P)H:plastoquinone, via FMN and iron-sulfur (Fe-S) centers, to quinones in the photosynthetic chain and possibly in a chloroplast respiratory chain. The immediate electron acceptor for the enzyme in this species is believed to be plastoquinone. Couples the redox reaction to proton translocation, and thus conserves the redox energy in a proton gradient. The sequence is that of NAD(P)H-quinone oxidoreductase subunit 5, chloroplastic (ndhF) from Sorghum bicolor (Sorghum).